A 308-amino-acid polypeptide reads, in one-letter code: Acetaldehyde dehydrogenase (308 aa).

Thr14–Ile17 contributes to the NAD(+) binding site. Cys129 (acyl-thioester intermediate) is an active-site residue. Residues Ser160–Asn168 and Asn280 each bind NAD(+).

The protein belongs to the acetaldehyde dehydrogenase family.

It carries out the reaction acetaldehyde + NAD(+) + CoA = acetyl-CoA + NADH + H(+). This is Acetaldehyde dehydrogenase from Thermomicrobium roseum (strain ATCC 27502 / DSM 5159 / P-2).